We begin with the raw amino-acid sequence, 387 residues long: 3-ketoacyl-CoA thiolase (387 aa).

The active-site Acyl-thioester intermediate is C91. Catalysis depends on proton acceptor residues H343 and C373.

Belongs to the thiolase-like superfamily. Thiolase family. Heterotetramer of two alpha chains (FadB) and two beta chains (FadA).

Its subcellular location is the cytoplasm. It carries out the reaction an acyl-CoA + acetyl-CoA = a 3-oxoacyl-CoA + CoA. The protein operates within lipid metabolism; fatty acid beta-oxidation. Catalyzes the final step of fatty acid oxidation in which acetyl-CoA is released and the CoA ester of a fatty acid two carbons shorter is formed. Involved in the aerobic and anaerobic degradation of long-chain fatty acids. This Escherichia coli O6:H1 (strain CFT073 / ATCC 700928 / UPEC) protein is 3-ketoacyl-CoA thiolase.